A 224-amino-acid chain; its full sequence is MSKKALCIISGGMDSTLCAYLAKKEGYEIIALHFDYEQRTQEKEKECFKQICKALKVEKSYILDVSFIKDIGGNALTDKSIDIPKNELCTSDTPPITYVPFRNGIFLSIAGSLAEKENCESIFIGVVEEDGSGYPDCTDEFIQKAQEFINEGTSKNFKVCIKTPLVRLNKAKIVELALKENVPLELTWSCYESEDEACGECDSCLLRLRGFEKAGFKDKIKYKS.

Residue 9–19 (ISGGMDSTLCA) participates in ATP binding. Zn(2+)-binding residues include C190, C198, C201, and C204.

The protein belongs to the QueC family. It depends on Zn(2+) as a cofactor.

It carries out the reaction 7-carboxy-7-deazaguanine + NH4(+) + ATP = 7-cyano-7-deazaguanine + ADP + phosphate + H2O + H(+). The protein operates within purine metabolism; 7-cyano-7-deazaguanine biosynthesis. In terms of biological role, catalyzes the ATP-dependent conversion of 7-carboxy-7-deazaguanine (CDG) to 7-cyano-7-deazaguanine (preQ(0)). The sequence is that of 7-cyano-7-deazaguanine synthase from Campylobacter jejuni (strain RM1221).